The primary structure comprises 2024 residues: Pericentriolar material 1 protein (2024 aa).

Residues 1 to 92 (MATGGGPFED…FPHSRYMSQM (92 aa)) are disordered. N-acetylalanine is present on Ala2. Residues 2–1460 (ATGGGPFEDG…TWIASNSELT (1459 aa)) form a mediates interaction with DZIP1 region. Residues 43-61 (RSSEKNKKKFGVESDKRVT) are compositionally biased toward basic and acidic residues. A phosphoserine mark is found at Ser65, Ser68, Ser69, Ser93, Ser110, Ser116, and Ser119. Positions 111-163 (DLDQRSIGSDSQGRATAANNKRQLSENRKPFNFLPMQINTNKSKDASTNPPNR) are disordered. 2 stretches are compositionally biased toward polar residues: residues 116–132 (SIGS…NNKR) and 147–163 (QINT…PPNR). Phosphoserine; in variant Ser-159 is present on Asn159. The stretch at 218-301 (KASSMREDLV…QLRALQGRQA (84 aa)) forms a coiled coil. Residues 354 to 392 (RDSQPPAVPDNRRQAESLSLTREVSQSRKPSASERLPDE) form a disordered region. Residues 369-383 (ESLSLTREVSQSRKP) show a composition bias toward polar residues. A Phosphoserine modification is found at Ser370. Ser372 carries the phosphoserine; by PLK4 modification. Ser384 carries the post-translational modification Phosphoserine. An N6-acetyllysine modification is found at Lys399. A coiled-coil region spans residues 400 to 424 (MRVLQEKKQKMDKLLGELHTLRDQH). Disordered stretches follow at residues 421 to 492 (RDQH…KLQK) and 523 to 548 (ENRK…VTNI). Composition is skewed to polar residues over residues 425–445 (LNNS…SAPS) and 456–477 (GESN…SQNE). Residues 487–543 (SEKLQKLNEVRKRLNELRELVHYYEQTSDMMTDAVNENRKDEETEESEYDSEHENSE) are a coiled coil. Position 588 is a phosphoserine (Ser588). 2 disordered regions span residues 614-652 (HVAQ…HPED) and 699-726 (FYPA…DTGV). A compositionally biased stretch (acidic residues) spans 618–632 (GEDDEEEEEEAEEEG). The segment covering 634-643 (SGASLSSHRS) has biased composition (low complexity). The residue at position 643 (Ser643) is a Phosphoserine. Residues 651–682 (EDAEFEQKINRLMAAKQKLRQLQDLVAMVQDD) adopt a coiled-coil conformation. Positions 708-719 (QNSNNTRGNANK) are enriched in polar residues. Coiled coils occupy residues 726-769 (VNEK…LQTA) and 824-858 (SEMR…GLAE). Phosphothreonine is present on Thr859. A phosphoserine mark is found at Ser861, Ser866, Ser869, and Ser872. A Phosphothreonine modification is found at Thr877. The segment at 915 to 947 (TDEEEEEEQDASSNDNFSVCPSNSVNHNSYNGK) is disordered. The segment covering 925 to 946 (ASSNDNFSVCPSNSVNHNSYNG) has biased composition (polar residues). Ser960, Ser977, Ser988, and Ser991 each carry phosphoserine. Residues 1063–1089 (TQLTWQQNNVQRLKQMLNELMRQQNQH) adopt a coiled-coil conformation. 2 disordered regions span residues 1085–1109 (QQNQ…PSPS) and 1152–1211 (FSQN…RTPW). Residues 1089–1099 (HPEKPGGKERG) show a composition bias toward basic and acidic residues. Positions 1152-1173 (FSQNISTPSEQQQPLAQNSSGK) are enriched in polar residues. Phosphoserine is present on residues Ser1185 and Ser1188. Basic and acidic residues predominate over residues 1192-1201 (EKPRNKKLPE). 2 positions are modified to phosphoserine: Ser1229 and Ser1231. The segment covering 1232–1246 (VEKSTSSNRKNQLDT) has biased composition (polar residues). A disordered region spans residues 1232 to 1342 (VEKSTSSNRK…RHSAQTEEPV (111 aa)). Phosphoserine occurs at positions 1257, 1260, 1262, and 1263. Residues 1279–1799 (TRKASAQASL…TQALTNYGSG (521 aa)) are interaction with HAP1. The span at 1296–1313 (KSKSKKRNSTQLKSRVKN) shows a compositional bias: basic residues. Phosphoserine occurs at positions 1318 and 1320. The residue at position 1468 (Thr1468) is a Phosphothreonine. Positions 1515–1539 (IHLDQALARMREYERMKTEAESNSN) form a coiled coil. Phosphoserine is present on residues Ser1573, Ser1697, Ser1730, Ser1765, Ser1768, Ser1776, and Ser1782. Disordered stretches follow at residues 1725 to 1868 (LEDH…NNCP) and 1880 to 1944 (EQPL…PVLV). Residues 1768-1777 (SDQEEDEESE) are compositionally biased toward acidic residues. Residues 1783 to 1797 (INLSKAETQALTNYG) are compositionally biased toward polar residues. The segment covering 1799 to 1815 (GEDENEDEEMEEFEEGP) has biased composition (acidic residues). A compositionally biased stretch (polar residues) spans 1818–1827 (VQTSLQANTE). The span at 1835–1860 (DEQVLQRDFKKTAESKNVPLEREATS) shows a compositional bias: basic and acidic residues. The segment covering 1905–1916 (PLRLPEMEPLVP) has biased composition (low complexity). An interaction with BBS4 region spans residues 1913-2024 (PLVPRVKEVK…EPETVGAQSI (112 aa)). Over residues 1924–1933 (AQETPESSLA) the composition is skewed to polar residues. Phosphoserine is present on residues Ser1958 and Ser1977. The tract at residues 2005-2024 (ELAGNSETLKEPETVGAQSI) is disordered.

This sequence belongs to the PCM1 family. In terms of assembly, self-associates. Interacts with C2CD3. Interacts with BBS4, BBS8, CETN3, HAP1, NDE1, NDEL1, MAP1LC3B, GABARAPAL2, and GABARAP. Interacts with CEP131; the interaction increases in response to ultraviolet light (UV) radiation. Associates with microtubule; association to microtubule is reduced in response to cellular stress, such as ultraviolet light (UV) radiation or heat shock, in a process that requires p38 MAP kinase signaling. Interacts with CFAP263. Interacts with SSX2IP. Interacts with CCDC13. Interacts with CEP290. Interacts with PARD6A. Interacts with KIAA0753/OFIP, CEP20/FOR20 and OFD1; the interaction with CEP20/FOR20 and OFD1 may be mediated by KIAA0753/OFIP. Interacts with CCDC66. Interacts with CCDC61. Interacts with DZIP1; localizes DZIP1 and the associated BBSome to centriolar satellite. Interacts with CSTPP1, TTLL1, TPGS1 and LRRC49. Interacts with CFAP53. Ubiquitinated. Undergoes monoubiquitination catalyzed by the E3 ubiquitin-protein ligase MIB1 in proliferating cells, preventing cilia formation. Monoubiquitination by MIB1 is inhibited in response to cellular stress, such as ultraviolet light (UV) radiation or heat shock, resulting in cilia formation initiation. Post-translationally, variant Ser-159 is phosphorylated. In terms of processing, phosphorylated on multiple serine and threonine residues by DYRK3 during the G2-to-M transition, after the nuclear-envelope breakdown. Phosphorylation by DYRK3 promotes disassembly of pericentriolar material. Phosphorylation at Ser-372 mediated by PLK4 is required to maintain the integrity of centriolar satellites. In terms of tissue distribution, expressed in blood, bone marrow, breast, lymph node, ovary and thyroid.

It is found in the cytoplasm. Its subcellular location is the cytoskeleton. It localises to the microtubule organizing center. The protein resides in the centrosome. The protein localises to the cytoplasmic granule. It is found in the centriolar satellite. Its subcellular location is the cilium basal body. Its function is as follows. Required for centrosome assembly and function. Essential for the correct localization of several centrosomal proteins including CEP250, CETN3, PCNT and NEK2. Required to anchor microtubules to the centrosome. Also involved in cilium biogenesis by recruiting the BBSome, a ciliary protein complex involved in cilium biogenesis, to the centriolar satellites. Recruits the tubulin polyglutamylase complex (TPGC) to centriolar satellites. The sequence is that of Pericentriolar material 1 protein from Homo sapiens (Human).